A 137-amino-acid polypeptide reads, in one-letter code: MSSGIALAPNCVSTFNDLKLGRKYGGIIYRISDDSKEIIVDSTLPAGCSFDEFTKCLPENECRYVVLDYQYKEEGAQKSKICFVAWCPDTANIKKKMMATSSKDSLRKACVGIQVEIQGTDASEVKDSCFYEKCTKI.

Residues 2 to 135 (SSGIALAPNC…KDSCFYEKCT (134 aa)) form the ADF-H domain.

Belongs to the actin-binding proteins ADF family.

The protein localises to the nucleus matrix. Its subcellular location is the cytoplasm. It is found in the cytoskeleton. In terms of biological role, controls reversibly actin polymerization and depolymerization in a pH-sensitive manner. It has the ability to bind G- and F-actin in a 1:1 ratio of cofilin to actin. It is the major component of intranuclear and cytoplasmic actin rods. The polypeptide is Cofilin-1A (cofA) (Dictyostelium discoideum (Social amoeba)).